Reading from the N-terminus, the 431-residue chain is 3-isopropylmalate dehydratase large subunit (431 aa).

3 residues coordinate [4Fe-4S] cluster: Cys300, Cys360, and Cys363.

Belongs to the aconitase/IPM isomerase family. LeuC type 2 subfamily. Heterodimer of LeuC and LeuD. The cofactor is [4Fe-4S] cluster.

It carries out the reaction (2R,3S)-3-isopropylmalate = (2S)-2-isopropylmalate. Its pathway is amino-acid biosynthesis; L-leucine biosynthesis; L-leucine from 3-methyl-2-oxobutanoate: step 2/4. Its function is as follows. Catalyzes the isomerization between 2-isopropylmalate and 3-isopropylmalate, via the formation of 2-isopropylmaleate. The sequence is that of 3-isopropylmalate dehydratase large subunit from Sulfurihydrogenibium sp. (strain YO3AOP1).